A 317-amino-acid chain; its full sequence is Lactamase-like protein adaB (317 aa).

Residues histidine 97, histidine 99, aspartate 101, and histidine 102 each contribute to the Zn(2+) site. Aspartate 101 acts as the Proton donor/acceptor in catalysis.

It belongs to the metallo-beta-lactamase superfamily. Zn(2+) serves as cofactor.

It carries out the reaction 3-(2,4-dioxopentyl)-2,3,6,8,9-pentahydroxy-1-oxo-1,2,3,4-tetrahydroanthracene-2-carboxyl-[ACP] = 2-acetyl-3,4a,8,10,11,12a-hexahydroxy-1,4,4a,5,12,12a-hexahydrotetracene-1,12-dione + holo-[ACP] + H(+). Its pathway is secondary metabolite biosynthesis. Functionally, lactamase-like protein; part of the gene cluster that mediates the biosynthesis of the linear tetracyclic TAN-1612 neuropeptide Y receptor antagonist. The decaketide backbone of TAN-1612 is synthesized by the non-reducing polyketide synthase adaA via condensation of one acetyl-CoA starter unit with 9 malonyl-CoA units. The FAD-dependent monooxygenase adaC then performs hydroxylation at C2 while the polaketide chain is still attached to the NRPKS adaA. The alpha-hydroxylation step at C2 appears to be crucial for the following C18-C1 Claisen cyclization and release of the C9-hydroxyl version of TAN-1612 from the NRPKS adaA, two steps performed by the lactamase-like protein adaB. Finally, the O-methyltransferase adaD performs the C9 O-methylation to complete the biosynthesis of TAN-1612. The chain is Lactamase-like protein adaB from Aspergillus niger (strain ATCC MYA-4892 / CBS 513.88 / FGSC A1513).